Reading from the N-terminus, the 180-residue chain is Riboflavin kinase (180 aa).

Positions 40 and 42 each coordinate Mg(2+). The active-site Nucleophile is the E117.

Belongs to the flavokinase family. Zn(2+) serves as cofactor. The cofactor is Mg(2+).

It catalyses the reaction riboflavin + ATP = FMN + ADP + H(+). It participates in cofactor biosynthesis; FMN biosynthesis; FMN from riboflavin (ATP route): step 1/1. Catalyzes the phosphorylation of riboflavin (vitamin B2) to form flavin mononucleotide (FMN) coenzyme. This Meyerozyma guilliermondii (strain ATCC 6260 / CBS 566 / DSM 6381 / JCM 1539 / NBRC 10279 / NRRL Y-324) (Yeast) protein is Riboflavin kinase (FMN1).